The following is a 300-amino-acid chain: UDP-N-acetylenolpyruvoylglucosamine reductase (300 aa).

Positions 30–194 constitute an FAD-binding PCMH-type domain; the sequence is KVGGAADFFV…VGATFRLDPA (165 aa). Residue Arg174 is part of the active site. Ser223 (proton donor) is an active-site residue. Glu293 is a catalytic residue.

This sequence belongs to the MurB family. Requires FAD as cofactor.

The protein localises to the cytoplasm. The catalysed reaction is UDP-N-acetyl-alpha-D-muramate + NADP(+) = UDP-N-acetyl-3-O-(1-carboxyvinyl)-alpha-D-glucosamine + NADPH + H(+). It participates in cell wall biogenesis; peptidoglycan biosynthesis. Functionally, cell wall formation. The protein is UDP-N-acetylenolpyruvoylglucosamine reductase of Geobacter metallireducens (strain ATCC 53774 / DSM 7210 / GS-15).